Consider the following 264-residue polypeptide: Thymidylate synthase (264 aa).

DUMP is bound at residue Arg21. Residue His51 coordinates (6R)-5,10-methylene-5,6,7,8-tetrahydrofolate. 126–127 (RR) contacts dUMP. Catalysis depends on Cys146, which acts as the Nucleophile. DUMP is bound by residues 166 to 169 (RSCD), Asn177, and 207 to 209 (HLY). Asp169 is a (6R)-5,10-methylene-5,6,7,8-tetrahydrofolate binding site. Residue Ala263 coordinates (6R)-5,10-methylene-5,6,7,8-tetrahydrofolate.

Belongs to the thymidylate synthase family. Bacterial-type ThyA subfamily. In terms of assembly, homodimer.

The protein localises to the cytoplasm. It carries out the reaction dUMP + (6R)-5,10-methylene-5,6,7,8-tetrahydrofolate = 7,8-dihydrofolate + dTMP. The protein operates within pyrimidine metabolism; dTTP biosynthesis. Functionally, catalyzes the reductive methylation of 2'-deoxyuridine-5'-monophosphate (dUMP) to 2'-deoxythymidine-5'-monophosphate (dTMP) while utilizing 5,10-methylenetetrahydrofolate (mTHF) as the methyl donor and reductant in the reaction, yielding dihydrofolate (DHF) as a by-product. This enzymatic reaction provides an intracellular de novo source of dTMP, an essential precursor for DNA biosynthesis. This is Thymidylate synthase from Shigella dysenteriae serotype 1 (strain Sd197).